Here is a 662-residue protein sequence, read N- to C-terminus: A-kinase anchor protein 10, mitochondrial (662 aa).

Residues 1-28 (MRGAGPSPRHSPRALRPDPGPAMSFFRR) constitute a mitochondrion transit peptide. Disordered regions lie at residues 1-55 (MRGA…SPQK), 178-205 (KQSSLAEPVSPSKRHETPASSVTEALDR), and 242-280 (GHSARSLHREVARTGSHQIPTDSQDSSSRLAVGSRNSCS). Positions 32–43 (GKEQEKTLDVKS) are enriched in basic and acidic residues. Residues Ser-52 and Ser-189 each carry the phosphoserine modification. 2 RGS domains span residues 125–369 (TLEQ…CKYQ) and 379–505 (YLAD…YKYL). Polar residues predominate over residues 256-280 (GSHQIPTDSQDSSSRLAVGSRNSCS). The residue at position 281 (Ser-281) is a Phosphoserine. The tract at residues 634-647 (LAWKIAKMIVSDVM) is PKA-RII subunit binding.

Highly expressed in testis, kidney and lung, followed by brain, skeletal muscle, liver, spleen and heart. Also expressed in brown adipose tissue and pancreas.

It is found in the mitochondrion. The protein localises to the membrane. It localises to the cytoplasm. In terms of biological role, differentially targeted protein that binds to type I and II regulatory subunits of protein kinase A and anchors them to the mitochondria or the plasma membrane. Although the physiological relevance between PKA and AKAPS with mitochondria is not fully understood, one idea is that BAD, a proapoptotic member, is phosphorylated and inactivated by mitochondria-anchored PKA. It cannot be excluded too that it may facilitate PKA as well as G protein signal transduction, by acting as an adapter for assembling multiprotein complexes. With its RGS domain, it could lead to the interaction to G-alpha proteins, providing a link between the signaling machinery and the downstream kinase. The sequence is that of A-kinase anchor protein 10, mitochondrial (Akap10) from Mus musculus (Mouse).